We begin with the raw amino-acid sequence, 165 residues long: Transcription elongation factor A protein-like 1 (165 aa).

Residues 1–101 form a disordered region; that stretch reads MENTRSENEE…EQPPCGVGKH (101 aa). Positions 33–60 are enriched in acidic residues; sequence CSEEDQSSEDLSSEEQSSEEEFFPEELL.

This sequence belongs to the TFS-II family. TFA subfamily.

The protein resides in the nucleus. In terms of biological role, may be involved in transcriptional regulation. Modulates various viral and cellular promoters in a promoter context-dependent manner. Does not bind DNA directly. In Mus musculus (Mouse), this protein is Transcription elongation factor A protein-like 1.